Here is a 222-residue protein sequence, read N- to C-terminus: MSDEKNKFTDASFENCDLKNPADRNTLKQAADEFLKTHKTEAREDVEEESKEVDPLASLQDENKELKNQLLRLAADMENLRRRTARDVADARAYSIANFARDMLSVSDNLNRALEAIPEGARESDAGLKSLAEGVEMTERAMMAALERHGVQKIHPEGQKFDPHFHQAMFEIPNADVPDNTVQQVVQAGYIIGERVLRPAIVGVAKGGTKEASIETDKASHQ.

The segment at 1-21 is disordered; sequence MSDEKNKFTDASFENCDLKNP.

The protein belongs to the GrpE family. As to quaternary structure, homodimer.

The protein resides in the cytoplasm. Its function is as follows. Participates actively in the response to hyperosmotic and heat shock by preventing the aggregation of stress-denatured proteins, in association with DnaK and GrpE. It is the nucleotide exchange factor for DnaK and may function as a thermosensor. Unfolded proteins bind initially to DnaJ; upon interaction with the DnaJ-bound protein, DnaK hydrolyzes its bound ATP, resulting in the formation of a stable complex. GrpE releases ADP from DnaK; ATP binding to DnaK triggers the release of the substrate protein, thus completing the reaction cycle. Several rounds of ATP-dependent interactions between DnaJ, DnaK and GrpE are required for fully efficient folding. In Bartonella tribocorum (strain CIP 105476 / IBS 506), this protein is Protein GrpE.